We begin with the raw amino-acid sequence, 304 residues long: tRNA dimethylallyltransferase (304 aa).

Gly10–Thr17 contributes to the ATP binding site. Thr12 to Thr17 provides a ligand contact to substrate. 3 interaction with substrate tRNA regions span residues Asp35–Leu38, Gln159–Arg163, and Arg240–Arg245.

This sequence belongs to the IPP transferase family. As to quaternary structure, monomer. It depends on Mg(2+) as a cofactor.

It catalyses the reaction adenosine(37) in tRNA + dimethylallyl diphosphate = N(6)-dimethylallyladenosine(37) in tRNA + diphosphate. Functionally, catalyzes the transfer of a dimethylallyl group onto the adenine at position 37 in tRNAs that read codons beginning with uridine, leading to the formation of N6-(dimethylallyl)adenosine (i(6)A). In Shewanella sp. (strain W3-18-1), this protein is tRNA dimethylallyltransferase.